We begin with the raw amino-acid sequence, 1208 residues long: Urease accessory protein 2 (1208 aa).

Coiled-coil stretches lie at residues 187–362 (RDKI…EKAA) and 400–469 (IKAL…MHEQ). The region spanning 523–633 (DGVFGPLYDL…ICEDLQTAAH (111 aa)) is the SMC hinge domain. Coiled coils occupy residues 688–771 (HIEV…YEEE) and 817–903 (NRLE…VQTQ). Residues 748 to 773 (ESSLEEAEGASRDAKAKRASYEEELR) form a disordered region. Positions 756–773 (GASRDAKAKRASYEEELR) are enriched in basic and acidic residues.

The protein belongs to the SMC family. SMC3 subfamily. As to quaternary structure, component of cohesin complexes.

Its subcellular location is the nucleus. Central component of cohesin, a complex required for chromosome cohesion during the cell cycle. The cohesin complex may form a large proteinaceous ring within which sister chromatids can be trapped. At anaphase, the complex is cleaved and dissociates from chromatin, allowing sister chromatids to segregate. Cohesion is coupled to DNA replication and is involved in DNA repair. The cohesin complex also plays an important role in spindle pole assembly during mitosis and in chromosomes movement. Is unrelated to urease function in C.neoformans. This chain is Urease accessory protein 2, found in Cryptococcus neoformans var. grubii serotype A (strain H99 / ATCC 208821 / CBS 10515 / FGSC 9487) (Filobasidiella neoformans var. grubii).